The primary structure comprises 465 residues: Sodium-dependent phosphate transport protein 1 (465 aa).

N39, N47, and N56 each carry an N-linked (GlcNAc...) asparagine glycan. 10 helical membrane-spanning segments follow: residues 79–99 (GLILSSVFFGMVVVQAPVGYL), 117–137 (SLMSLLLPPAAQVGAALVIVC), 176–196 (FVMGPFIVLLVSGFICDLLGW), 199–219 (VFYIFGIVGCVLSLSWFFLFF), 260–280 (LPLWAIILNSFAFIWSNSLLV), 304–324 (LPYLLAYICGILAGQMSDFFL), 337–356 (LFTTLGSFCPVIFIMCLLYL), 363–383 (TVIFLTLANSTLSFSYCGQLI), 399–419 (VTALIGMFGGLISSTLAGLIL), and 429–449 (KIFFLMAGINVTCLVFYFLFA).

This sequence belongs to the major facilitator superfamily. Sodium/anion cotransporter family. In terms of assembly, interacts with PDZK1. In terms of tissue distribution, kidney.

The protein resides in the apical cell membrane. The enzyme catalyses 3 Na(+)(out) + phosphate(out) = 3 Na(+)(in) + phosphate(in). It catalyses the reaction urate(out) = urate(in). Functionally, important for the resorption of phosphate by the kidney. May be involved in actively transporting phosphate into cells via Na(+) cotransport in the renal brush border membrane. Plays a role in urate transport in the kidney. This is Sodium-dependent phosphate transport protein 1 (Slc17a1) from Mus musculus (Mouse).